The primary structure comprises 399 residues: Immunoglobulin heavy constant gamma 1 (399 aa).

A disordered region spans residues 1–21 (ASTKGPSVFPLAPSSKSTSGG). A CH1 region spans residues 1-98 (ASTKGPSVFP…PSNTKVDKKV (98 aa)). The Extracellular portion of the chain corresponds to 1–350 (ASTKGPSVFP…DGELDGLWTT (350 aa)). Ig-like domains follow at residues 6 to 99 (PSVF…KKVE), 121 to 220 (PSVF…KTIS), and 229 to 325 (PQVY…KSLS). An intrachain disulfide couples Cys-27 to Cys-83. The interval 99–110 (EPKSCDKTHTCP) is hinge. Residues 111–223 (PCPAPELLGG…PIEKTISKAK (113 aa)) form a CH2 region. Intrachain disulfides connect Cys-144-Cys-204 and Cys-250-Cys-308. N-linked (GlcNAc...) (complex) asparagine glycosylation occurs at Asn-180. The CH3 stretch occupies residues 224 to 330 (GQPREPQVYT…QKSLSLSPEL (107 aa)). Residues 351-371 (ITIFITLFLLSVCYSATVTFF) form a helical membrane-spanning segment. Residues 372–399 (KVKWIFSSVVDLKQTIIPDYRNMIGQGA) lie on the Cytoplasmic side of the membrane.

As to quaternary structure, immunoglobulins are composed of two identical heavy chains and two identical light chains; disulfide-linked. Interacts with FCGR1A; this interaction mediates IgG effector functions on monocytes. Interacts with FCGR2A and FCGR3A. Glycosylation on Asn-180 is required for interaction with Fc receptors and ability to activate the complement pathway. Post-translationally, (Microbial infection) Deglycosylation on Asn-180 by S.pyogenes EndoS or Endos2 endoglucosidases prevents interaction between immunoglobulin-gamma (IgG) and Fc receptors, impairing ability to activate the complement pathway.

It localises to the secreted. Its subcellular location is the cell membrane. Functionally, constant region of immunoglobulin heavy chains. Immunoglobulins, also known as antibodies, are membrane-bound or secreted glycoproteins produced by B lymphocytes. In the recognition phase of humoral immunity, the membrane-bound immunoglobulins serve as receptors which, upon binding of a specific antigen, trigger the clonal expansion and differentiation of B lymphocytes into immunoglobulins-secreting plasma cells. Secreted immunoglobulins mediate the effector phase of humoral immunity, which results in the elimination of bound antigens. The antigen binding site is formed by the variable domain of one heavy chain, together with that of its associated light chain. Thus, each immunoglobulin has two antigen binding sites with remarkable affinity for a particular antigen. The variable domains are assembled by a process called V-(D)-J rearrangement and can then be subjected to somatic hypermutations which, after exposure to antigen and selection, allow affinity maturation for a particular antigen. Mediates IgG effector functions on monocytes triggering ADCC of virus-infected cells. This Homo sapiens (Human) protein is Immunoglobulin heavy constant gamma 1.